The following is a 299-amino-acid chain: Probable lipid kinase YegS (299 aa).

The region spanning 2-133 is the DAGKc domain; sequence AEFPASLLIL…IDMAQVNKQT (132 aa). Residues threonine 40, 66-72, and threonine 95 contribute to the ATP site; that span reads GDGTINE. The Mg(2+) site is built by leucine 215, aspartate 218, and leucine 220. The active-site Proton acceptor is glutamate 271.

The protein belongs to the diacylglycerol/lipid kinase family. YegS lipid kinase subfamily. Requires Mg(2+) as cofactor. The cofactor is Ca(2+).

It is found in the cytoplasm. Its function is as follows. Probably phosphorylates lipids; the in vivo substrate is unknown. This chain is Probable lipid kinase YegS, found in Escherichia coli O127:H6 (strain E2348/69 / EPEC).